We begin with the raw amino-acid sequence, 455 residues long: Ribosomal protein uS12 methylthiotransferase RimO (455 aa).

In terms of domain architecture, MTTase N-terminal spans 10 to 126; the sequence is RKVSMISLGC…ILELIEAHDR (117 aa). C19, C55, C89, C164, C168, and C171 together coordinate [4Fe-4S] cluster. In terms of domain architecture, Radical SAM core spans 150 to 380; it reads SSPFYSTYVK…MKAQQRVSFR (231 aa). Residues 383–451 enclose the TRAM domain; it reads RALIGRVEPV…EYDLIGEIVD (69 aa).

It belongs to the methylthiotransferase family. RimO subfamily. [4Fe-4S] cluster is required as a cofactor.

The protein localises to the cytoplasm. It carries out the reaction L-aspartate(89)-[ribosomal protein uS12]-hydrogen + (sulfur carrier)-SH + AH2 + 2 S-adenosyl-L-methionine = 3-methylsulfanyl-L-aspartate(89)-[ribosomal protein uS12]-hydrogen + (sulfur carrier)-H + 5'-deoxyadenosine + L-methionine + A + S-adenosyl-L-homocysteine + 2 H(+). Functionally, catalyzes the methylthiolation of an aspartic acid residue of ribosomal protein uS12. The sequence is that of Ribosomal protein uS12 methylthiotransferase RimO from Syntrophotalea carbinolica (strain DSM 2380 / NBRC 103641 / GraBd1) (Pelobacter carbinolicus).